We begin with the raw amino-acid sequence, 310 residues long: Cysteine synthase (310 aa).

An N6-(pyridoxal phosphate)lysine modification is found at lysine 46. Residues asparagine 76, 180–184 (GTGGT), and serine 268 contribute to the pyridoxal 5'-phosphate site.

The protein belongs to the cysteine synthase/cystathionine beta-synthase family. As to quaternary structure, homodimer. It depends on pyridoxal 5'-phosphate as a cofactor.

It catalyses the reaction O-acetyl-L-serine + hydrogen sulfide = L-cysteine + acetate. It participates in amino-acid biosynthesis; L-cysteine biosynthesis; L-cysteine from L-serine: step 2/2. The chain is Cysteine synthase (cysK) from Staphylococcus aureus (strain Mu50 / ATCC 700699).